Here is a 57-residue protein sequence, read N- to C-terminus: Andropin (57 aa).

The signal sequence occupies residues 1 to 23; that stretch reads MKYFVVLVVLALILAISVGPSDA.

The protein belongs to the andropin family. As to expression, ejaculatory duct of adult males.

The protein resides in the secreted. Male-specific peptide with moderate activity against Gram-positive bacteria. The polypeptide is Andropin (Anp) (Drosophila melanogaster (Fruit fly)).